Consider the following 242-residue polypeptide: UDP-2,3-diacylglucosamine hydrolase (242 aa).

Residues aspartate 9, histidine 11, aspartate 42, asparagine 79, and histidine 114 each contribute to the Mn(2+) site. 79–80 lines the substrate pocket; sequence NR. Residues aspartate 122, serine 160, asparagine 164, lysine 167, and histidine 195 each contribute to the substrate site. Histidine 195 and histidine 197 together coordinate Mn(2+).

Belongs to the LpxH family. It depends on Mn(2+) as a cofactor.

The protein localises to the cell inner membrane. It catalyses the reaction UDP-2-N,3-O-bis[(3R)-3-hydroxytetradecanoyl]-alpha-D-glucosamine + H2O = 2-N,3-O-bis[(3R)-3-hydroxytetradecanoyl]-alpha-D-glucosaminyl 1-phosphate + UMP + 2 H(+). Its pathway is glycolipid biosynthesis; lipid IV(A) biosynthesis; lipid IV(A) from (3R)-3-hydroxytetradecanoyl-[acyl-carrier-protein] and UDP-N-acetyl-alpha-D-glucosamine: step 4/6. Its function is as follows. Hydrolyzes the pyrophosphate bond of UDP-2,3-diacylglucosamine to yield 2,3-diacylglucosamine 1-phosphate (lipid X) and UMP by catalyzing the attack of water at the alpha-P atom. Involved in the biosynthesis of lipid A, a phosphorylated glycolipid that anchors the lipopolysaccharide to the outer membrane of the cell. In Shewanella loihica (strain ATCC BAA-1088 / PV-4), this protein is UDP-2,3-diacylglucosamine hydrolase.